Here is a 302-residue protein sequence, read N- to C-terminus: tRNA-cytidine(32) 2-sulfurtransferase (302 aa).

Residues 43–48 carry the PP-loop motif motif; the sequence is SGGKDS. Residues cysteine 118, cysteine 121, and cysteine 209 each coordinate [4Fe-4S] cluster.

This sequence belongs to the TtcA family. In terms of assembly, homodimer. Mg(2+) serves as cofactor. It depends on [4Fe-4S] cluster as a cofactor.

Its subcellular location is the cytoplasm. The catalysed reaction is cytidine(32) in tRNA + S-sulfanyl-L-cysteinyl-[cysteine desulfurase] + AH2 + ATP = 2-thiocytidine(32) in tRNA + L-cysteinyl-[cysteine desulfurase] + A + AMP + diphosphate + H(+). Its pathway is tRNA modification. Functionally, catalyzes the ATP-dependent 2-thiolation of cytidine in position 32 of tRNA, to form 2-thiocytidine (s(2)C32). The sulfur atoms are provided by the cysteine/cysteine desulfurase (IscS) system. In Polynucleobacter asymbioticus (strain DSM 18221 / CIP 109841 / QLW-P1DMWA-1) (Polynucleobacter necessarius subsp. asymbioticus), this protein is tRNA-cytidine(32) 2-sulfurtransferase.